A 512-amino-acid chain; its full sequence is Maturase K (512 aa).

It belongs to the intron maturase 2 family. MatK subfamily.

The protein resides in the plastid. It is found in the chloroplast. Its function is as follows. Usually encoded in the trnK tRNA gene intron. Probably assists in splicing its own and other chloroplast group II introns. This is Maturase K from Oenothera glazioviana (Large-flowered evening primrose).